The sequence spans 437 residues: Protein WVD2-like 5 (437 aa).

3 disordered regions span residues 1-22 (MDPESIMAADGTDSAPANGGLA), 38-210 (TVDT…FSFK), and 254-437 (LRKS…AVEH). Residues 41–55 (TTSESQNENSANSST) show a composition bias toward low complexity. Positions 58–86 (TIEHVKEAAEGTQVEHVDDSKCMKGEKAQ) are enriched in basic and acidic residues. A compositionally biased stretch (polar residues) spans 121-140 (SNGSVAPNVQTTNPLKSKSF). Over residues 151–167 (GKHDSAPAESADGEKVK) the composition is skewed to basic and acidic residues. Serine 208 carries the post-translational modification Phosphoserine. Positions 288–297 (KSPKLGRKKT) are enriched in basic residues. Residues 360 to 371 (PAPAKAAIIPAK) are compositionally biased toward low complexity. Positions 408-437 (EDSHETVSPRMNEDRADKSIEVSEAVAVEH) are enriched in basic and acidic residues. Serine 415 is subject to Phosphoserine.

The protein belongs to the TPX2 family. As to expression, expressed in seedlings.

The protein localises to the cytoplasm. The protein resides in the cytoskeleton. Functionally, microtubule-associated protein (MAP) that regulates the orientation of interphase cortical microtubules. This is Protein WVD2-like 5 from Arabidopsis thaliana (Mouse-ear cress).